Here is a 958-residue protein sequence, read N- to C-terminus: Isoleucine--tRNA ligase (958 aa).

Residues 1-32 (MSDNQNKPGKPAAKPQSKYPVNMTDTPFPMRG) are disordered. Positions 71 to 81 (PYANGDIHLGH) match the 'HIGH' region motif. L-isoleucyl-5'-AMP is bound at residue glutamate 590. Residues 631–635 (KMSKS) carry the 'KMSKS' region motif. Position 634 (lysine 634) interacts with ATP. Zn(2+)-binding residues include cysteine 921, cysteine 924, cysteine 941, and cysteine 944.

The protein belongs to the class-I aminoacyl-tRNA synthetase family. IleS type 1 subfamily. Monomer. It depends on Zn(2+) as a cofactor.

The protein localises to the cytoplasm. The catalysed reaction is tRNA(Ile) + L-isoleucine + ATP = L-isoleucyl-tRNA(Ile) + AMP + diphosphate. Its function is as follows. Catalyzes the attachment of isoleucine to tRNA(Ile). As IleRS can inadvertently accommodate and process structurally similar amino acids such as valine, to avoid such errors it has two additional distinct tRNA(Ile)-dependent editing activities. One activity is designated as 'pretransfer' editing and involves the hydrolysis of activated Val-AMP. The other activity is designated 'posttransfer' editing and involves deacylation of mischarged Val-tRNA(Ile). The polypeptide is Isoleucine--tRNA ligase (Janthinobacterium sp. (strain Marseille) (Minibacterium massiliensis)).